A 476-amino-acid polypeptide reads, in one-letter code: Adenosylhomocysteinase (476 aa).

Residues Thr62, Asp141, and Glu201 each coordinate substrate. 202–204 lines the NAD(+) pocket; sequence TTT. The substrate site is built by Lys231 and Asp235. NAD(+) contacts are provided by residues Asn236, 265–270, Glu288, Asn323, 344–346, and Asn389; these read GYGDVG and IGH.

Belongs to the adenosylhomocysteinase family. It depends on NAD(+) as a cofactor.

Its subcellular location is the cytoplasm. The catalysed reaction is S-adenosyl-L-homocysteine + H2O = L-homocysteine + adenosine. It participates in amino-acid biosynthesis; L-homocysteine biosynthesis; L-homocysteine from S-adenosyl-L-homocysteine: step 1/1. In terms of biological role, may play a key role in the regulation of the intracellular concentration of adenosylhomocysteine. This chain is Adenosylhomocysteinase, found in Delftia acidovorans (strain DSM 14801 / SPH-1).